We begin with the raw amino-acid sequence, 78 residues long: ATP synthase subunit c (78 aa).

2 helical membrane-spanning segments follow: residues 11 to 31 (FIGA…VGHV) and 53 to 73 (LFIG…VALL).

This sequence belongs to the ATPase C chain family. F-type ATPases have 2 components, F(1) - the catalytic core - and F(0) - the membrane proton channel. F(1) has five subunits: alpha(3), beta(3), gamma(1), delta(1), epsilon(1). F(0) has four main subunits: a(1), b(1), b'(1) and c(10-14). The alpha and beta chains form an alternating ring which encloses part of the gamma chain. F(1) is attached to F(0) by a central stalk formed by the gamma and epsilon chains, while a peripheral stalk is formed by the delta, b and b' chains.

Its subcellular location is the cell inner membrane. In terms of biological role, f(1)F(0) ATP synthase produces ATP from ADP in the presence of a proton or sodium gradient. F-type ATPases consist of two structural domains, F(1) containing the extramembraneous catalytic core and F(0) containing the membrane proton channel, linked together by a central stalk and a peripheral stalk. During catalysis, ATP synthesis in the catalytic domain of F(1) is coupled via a rotary mechanism of the central stalk subunits to proton translocation. Functionally, key component of the F(0) channel; it plays a direct role in translocation across the membrane. A homomeric c-ring of between 10-14 subunits forms the central stalk rotor element with the F(1) delta and epsilon subunits. The polypeptide is ATP synthase subunit c (Jannaschia sp. (strain CCS1)).